The chain runs to 454 residues: Maintenance of mitochondrial morphology protein 1 (454 aa).

At methionine 1 to glycine 117 the chain is on the lumenal side. A helical transmembrane segment spans residues leucine 118 to phenylalanine 138. The Cytoplasmic segment spans residues serine 139–tyrosine 454. The disordered stretch occupies residues lysine 144–serine 164. Residues serine 153–serine 164 are compositionally biased toward low complexity. An SMP-LTD domain is found at proline 215–proline 427. Arginine 253, tryptophan 411, arginine 415, tryptophan 430, arginine 432, and serine 433 together coordinate a 1,2-diacyl-sn-glycero-3-phosphate. The interval lysine 434 to tyrosine 454 is disordered. A compositionally biased stretch (basic and acidic residues) spans asparagine 435 to tyrosine 454.

Belongs to the MMM1 family. As to quaternary structure, homodimer. Component of the ER-mitochondria encounter structure (ERMES) or MDM complex, composed of MMM1, MDM10, MDM12 and MDM34. An MMM1 homodimer associates with one molecule of MDM12 on each side in a pairwise head-to-tail manner, and the SMP-LTD domains of MMM1 and MDM12 generate a continuous hydrophobic tunnel for phospholipid trafficking.

Its subcellular location is the endoplasmic reticulum membrane. In terms of biological role, component of the ERMES/MDM complex, which serves as a molecular tether to connect the endoplasmic reticulum (ER) and mitochondria. Components of this complex are involved in the control of mitochondrial shape and protein biogenesis, and function in nonvesicular lipid trafficking between the ER and mitochondria. Preferentially binds to glycerophospholipids such as phosphatidylcholoine (PC), phosphatidic acid (PA), phosphatidylglycerol (PG), and phosphatidylserine (PS), but not to phosphatidylethanolamine (PE). The MDM12-MMM1 subcomplex functions in the major beta-barrel assembly pathway that is responsible for biogenesis of all outer membrane beta-barrel proteins, and acts in a late step after the SAM complex. The MDM10-MDM12-MMM1 subcomplex further acts in the TOM40-specific pathway after the action of the MDM12-MMM1 complex. Essential for establishing and maintaining the structure of mitochondria and maintenance of mtDNA nucleoids. This chain is Maintenance of mitochondrial morphology protein 1, found in Zygosaccharomyces rouxii (strain ATCC 2623 / CBS 732 / NBRC 1130 / NCYC 568 / NRRL Y-229).